The sequence spans 179 residues: Adenine phosphoribosyltransferase (179 aa).

This sequence belongs to the purine/pyrimidine phosphoribosyltransferase family. Homodimer.

Its subcellular location is the cytoplasm. It catalyses the reaction AMP + diphosphate = 5-phospho-alpha-D-ribose 1-diphosphate + adenine. It participates in purine metabolism; AMP biosynthesis via salvage pathway; AMP from adenine: step 1/1. Catalyzes a salvage reaction resulting in the formation of AMP, that is energically less costly than de novo synthesis. In Jannaschia sp. (strain CCS1), this protein is Adenine phosphoribosyltransferase.